We begin with the raw amino-acid sequence, 346 residues long: Phenylalanine--tRNA ligase alpha subunit (346 aa).

E258 is a Mg(2+) binding site.

Belongs to the class-II aminoacyl-tRNA synthetase family. Phe-tRNA synthetase alpha subunit type 1 subfamily. As to quaternary structure, tetramer of two alpha and two beta subunits. The cofactor is Mg(2+).

It localises to the cytoplasm. It carries out the reaction tRNA(Phe) + L-phenylalanine + ATP = L-phenylalanyl-tRNA(Phe) + AMP + diphosphate + H(+). The chain is Phenylalanine--tRNA ligase alpha subunit from Protochlamydia amoebophila (strain UWE25).